A 172-amino-acid chain; its full sequence is HTH-type transcriptional regulator IscR (172 aa).

Residues 2 to 131 (RLTSKGRYAV…NNITLGELMR (130 aa)) enclose the HTH rrf2-type domain. Positions 28–51 (LADISERQGISLSYLEQLFSRLRK) form a DNA-binding region, H-T-H motif. [2Fe-2S] cluster is bound by residues Cys92, Cys98, and Cys104.

The cofactor is [2Fe-2S] cluster.

In terms of biological role, regulates the transcription of several operons and genes involved in the biogenesis of Fe-S clusters and Fe-S-containing proteins. The chain is HTH-type transcriptional regulator IscR from Photobacterium profundum (strain SS9).